A 499-amino-acid polypeptide reads, in one-letter code: Ammonium transporter MEP2 (499 aa).

Over 1-31 (MSYNFTGTPTGEGTGGNSLTTDLNTQFDLAN) the chain is Extracellular. Asn4 carries N-linked (GlcNAc...) asparagine glycosylation. The helical transmembrane segment at 32–52 (MGWIGVASAGVWIMVPGIGLL) threads the bilayer. The Cytoplasmic segment spans residues 53–62 (YSGLSRKKHA). Residues 63-83 (LSLLWASMMASAVCIFQWFFW) traverse the membrane as a helical segment. The Extracellular portion of the chain corresponds to 84–122 (GYSLAFSHNTRGNGFIGTLEFFGFRNVLGAPSSVSSLPD). Residues 123-143 (ILFAVYQGMFAAVTGALMLGG) traverse the membrane as a helical segment. The Cytoplasmic portion of the chain corresponds to 144 to 152 (ACERARLFP). A helical transmembrane segment spans residues 153 to 173 (MMVFLFLWMTIVYCPIACWVW). Residues 174 to 187 (NAEGWLVKLGSLDY) are Extracellular-facing. Residues 188 to 208 (AGGLCVHLTSGHGGLVYALIL) traverse the membrane as a helical segment. Residues 209 to 230 (GKRNDPVTRKGMPKYKPHSVTS) are Cytoplasmic-facing. A helical transmembrane segment spans residues 231-251 (VVLGTVFLWFGWMFFNGGSAG). Residues 252–257 (NATIRA) are Extracellular-facing. Residues 258-278 (WYSIMSTNLAAACGGLTWMVI) traverse the membrane as a helical segment. Residues 279–289 (DYFRCGRKWTT) are Cytoplasmic-facing. Residues 290 to 312 (VGLCSGIIAGLVGITPAAGFVPI) form a helical membrane-spanning segment. Topologically, residues 313–315 (WSA) are extracellular. Residues 316 to 338 (VVIGVVTGAGCNLAVDLKSLLRI) traverse the membrane as a helical segment. At 339–346 (DDGLDCYS) the chain is on the cytoplasmic side. The chain crosses the membrane as a helical span at residues 347–367 (IHGVGGCIGSVLTGIFAADYV). The Extracellular segment spans residues 368–393 (NATAGSYISPIDGGWINHHYKQVGYQ). Residues 394–414 (LAGICAALAWTVTVTSILLLT) form a helical membrane-spanning segment. The Cytoplasmic portion of the chain corresponds to 415 to 499 (MNAIPFLKLR…SSTKNTDHIV (85 aa)). The enhancer domain stretch occupies residues 428–441 (DEEELGTDAAQIGE). The segment at 442 to 449 (FTYEESTA) is linker domain. An autoinhibitory domain region spans residues 450 to 485 (YIPEPIRSKTSAQMPPPHENIDDKIVGNTDAEKNST). The tract at residues 455–499 (IRSKTSAQMPPPHENIDDKIVGNTDAEKNSTPSDASSTKNTDHIV) is disordered. Ser457 bears the Phosphoserine mark. Residues 468 to 482 (ENIDDKIVGNTDAEK) show a composition bias toward basic and acidic residues. Residues 483-493 (NSTPSDASSTK) show a composition bias toward polar residues.

It belongs to the ammonia transporter channel (TC 1.A.11.2) family. Phosphorylated at Ser-457 by the TORC1 effector kinase NPR1 under nitrogen-limiting conditions which causes a conformational change in the C-terminal region (CTR) to form an open active conformation. Supplementation of nitrogen source leads to inactivation and instant Ser-457 dephosphorylation via plasma membrane PSR1 and PSR2 redundant phosphatases. In terms of processing, the residue Asn-4 of the protein's N-terminal tail is the only site that is glycosylated.

It localises to the cell membrane. In terms of biological role, transporter for ammonium (both charged and uncharged NH3 and NH4) to use as a nitrogen source. The affinity of MEP2 is about twenty times higher than that of MEP1. MEP3 has the lowest affinity. Under ammonium limitation acts as an ammonium sensor, generating a signal that leads to pseudohyphal (filamentous) growth. The protein is Ammonium transporter MEP2 of Saccharomyces cerevisiae (strain ATCC 204508 / S288c) (Baker's yeast).